Here is a 547-residue protein sequence, read N- to C-terminus: MAAKDVKFGNDARVKMLKGVNVLADAVKVTLGPKGRNVVLDKAFGAPTITKDGVSVAREIELEDKFENMGAQMVKEVASKANDAAGDGTTTATVLAQAIVNEGLKAVAAGMNPMDLKRGIDKAVAAVVEELKSLSKPCETSKEIEQVGTISANSDSTVGKLIAQAMEKVGKEGVITVEDGTGLEDALDVVEGMQFDRGYLSPYFINKPEAGTVELENPYILLVDKKISNIREILPVLEAVAKAGKPLLIIAEDIEGEALATLVVNTMRGIVKVAAVKAPGFGDRRKAMLQDIAILTAGTVISEEIGMELEKATIEELGQAKRVVISKDNTTIIDGVGDEVQIKARVAQIRQQIEDSTSDYDKEKLQERVAKLAGGVAVIKVGAATEVEMKEKKDRVDDALHATRAAVEEGIIAGGGVALVRAASKVADVVKGDNEEQNVGIRLALRAMEAPLRQIVTNAGEEASVVARNVKDGNGNYGYNAATEQYGDMLEMGILDPTKVTRSALQFAASIAGLMITTECMVTDLPKEEKADLGAGMGGMGGMGGMM.

Residues 30 to 33, Lys51, 87 to 91, Gly415, 480 to 482, and Asp496 each bind ATP; these read TLGP, DGTTT, and NAA.

The protein belongs to the chaperonin (HSP60) family. As to quaternary structure, forms a cylinder of 14 subunits composed of two heptameric rings stacked back-to-back. Interacts with the co-chaperonin GroES.

The protein resides in the cytoplasm. It catalyses the reaction ATP + H2O + a folded polypeptide = ADP + phosphate + an unfolded polypeptide.. Its function is as follows. Together with its co-chaperonin GroES, plays an essential role in assisting protein folding. The GroEL-GroES system forms a nano-cage that allows encapsulation of the non-native substrate proteins and provides a physical environment optimized to promote and accelerate protein folding. In Glaesserella parasuis serovar 5 (strain SH0165) (Haemophilus parasuis), this protein is Chaperonin GroEL.